The chain runs to 550 residues: Eukaryotic translation initiation factor 3 subunit D-2 (550 aa).

The segment at 108–152 is disordered; the sequence is RTRGRTGRGTPNIASLGGSTAGGATASTTKYGKGRHTRNTQNVGR. The span at 115–136 shows a compositional bias: low complexity; sequence RGTPNIASLGGSTAGGATASTT. The RNA gate stretch occupies residues 290–304; that stretch reads QFDLLTVNETSVEPP. The segment at 527–550 is disordered; it reads PENAFDSDRDEEESSEPLSNSNDN.

The protein belongs to the eIF-3 subunit D family. Component of the eukaryotic translation initiation factor 3 (eIF-3) complex. The eIF-3 complex interacts with pix.

The protein localises to the cytoplasm. Its function is as follows. mRNA cap-binding component of the eukaryotic translation initiation factor 3 (eIF-3) complex, which is involved in protein synthesis of a specialized repertoire of mRNAs and, together with other initiation factors, stimulates binding of mRNA and methionyl-tRNAi to the 40S ribosome. The eIF-3 complex specifically targets and initiates translation of a subset of mRNAs involved in cell proliferation. In the eIF-3 complex, eif3d specifically recognizes and binds the 7-methylguanosine cap of a subset of mRNAs. The protein is Eukaryotic translation initiation factor 3 subunit D-2 of Drosophila sechellia (Fruit fly).